Here is a 129-residue protein sequence, read N- to C-terminus: Phosphoribosyl-AMP cyclohydrolase (129 aa).

D85 provides a ligand contact to Mg(2+). C86 provides a ligand contact to Zn(2+). Mg(2+) is bound by residues D87 and D89. Zn(2+) is bound by residues C102 and C109.

The protein belongs to the PRA-CH family. As to quaternary structure, homodimer. Mg(2+) is required as a cofactor. Requires Zn(2+) as cofactor.

It is found in the cytoplasm. It catalyses the reaction 1-(5-phospho-beta-D-ribosyl)-5'-AMP + H2O = 1-(5-phospho-beta-D-ribosyl)-5-[(5-phospho-beta-D-ribosylamino)methylideneamino]imidazole-4-carboxamide. It participates in amino-acid biosynthesis; L-histidine biosynthesis; L-histidine from 5-phospho-alpha-D-ribose 1-diphosphate: step 3/9. Catalyzes the hydrolysis of the adenine ring of phosphoribosyl-AMP. This chain is Phosphoribosyl-AMP cyclohydrolase, found in Methanococcus maripaludis (strain C7 / ATCC BAA-1331).